The chain runs to 190 residues: GTP cyclohydrolase 1 (190 aa).

Residues cysteine 75, histidine 78, and cysteine 146 each coordinate Zn(2+).

It belongs to the GTP cyclohydrolase I family. In terms of assembly, homomer.

It catalyses the reaction GTP + H2O = 7,8-dihydroneopterin 3'-triphosphate + formate + H(+). The protein operates within cofactor biosynthesis; 7,8-dihydroneopterin triphosphate biosynthesis; 7,8-dihydroneopterin triphosphate from GTP: step 1/1. In Campylobacter jejuni subsp. jejuni serotype O:6 (strain 81116 / NCTC 11828), this protein is GTP cyclohydrolase 1.